The chain runs to 321 residues: 2,3,4,5-tetrahydropyridine-2,6-dicarboxylate N-succinyltransferase (321 aa).

D166 and E183 together coordinate Mg(2+). The active-site Acyl-anhydride intermediate is E199. Residues R201, G216, S219, A242, E257–A258, G265, K281, and R294–S297 each bind succinyl-CoA.

Belongs to the type 2 tetrahydrodipicolinate N-succinyltransferase family. Homotrimer.

Its subcellular location is the cytoplasm. The catalysed reaction is (S)-2,3,4,5-tetrahydrodipicolinate + succinyl-CoA + H2O = (S)-2-succinylamino-6-oxoheptanedioate + CoA. The protein operates within amino-acid biosynthesis; L-lysine biosynthesis via DAP pathway; LL-2,6-diaminopimelate from (S)-tetrahydrodipicolinate (succinylase route): step 1/3. Functionally, catalyzes the conversion of the cyclic tetrahydrodipicolinate (THDP) into the acyclic N-succinyl-L-2-amino-6-oxopimelate using succinyl-CoA. The polypeptide is 2,3,4,5-tetrahydropyridine-2,6-dicarboxylate N-succinyltransferase (Rothia mucilaginosa (strain DY-18) (Stomatococcus mucilaginosus)).